A 295-amino-acid chain; its full sequence is MIKQYLQVTKPGIIFGNLISVIGGFLLASKGDIDYPLFLSTLLGVSLVVASGCVFNNYIDRDIDKIMERTKNRVLVKGLIDPKVSLIYASVLGIAGMLLLYVAANALAMMLAVIGFVIYVGVYSLYMKRKSVYGTLIGSLSGAAPPVIGYCAVTGQFDTGALILLLIFSLWQMPHSYAIAIFRFKDYQAANIPVLPVIKGISVTKNHITLYILAFMVATLMLTLSGYAGYKYLVVAAAVSVWWLGMALRGYKATNDSVWARKLFVFSIIAITSLSVMMSVDFNVHSSAVLLTYAG.

Helical transmembrane passes span 8-28 (VTKP…FLLA), 35-55 (YPLF…GCVF), 74-94 (VLVK…VLGI), 98-118 (LLLY…GFVI), 132-152 (VYGT…GYCA), 162-182 (LILL…IAIF), 208-228 (ITLY…SGYA), 233-253 (LVVA…GYKA), and 264-284 (FVFS…DFNV).

It belongs to the UbiA prenyltransferase family. Protoheme IX farnesyltransferase subfamily.

It localises to the cell inner membrane. The enzyme catalyses heme b + (2E,6E)-farnesyl diphosphate + H2O = Fe(II)-heme o + diphosphate. Its pathway is porphyrin-containing compound metabolism; heme O biosynthesis; heme O from protoheme: step 1/1. Converts heme B (protoheme IX) to heme O by substitution of the vinyl group on carbon 2 of heme B porphyrin ring with a hydroxyethyl farnesyl side group. The polypeptide is Protoheme IX farnesyltransferase (Yersinia pseudotuberculosis serotype O:1b (strain IP 31758)).